The primary structure comprises 120 residues: Ribosome-binding factor A (120 aa).

The protein belongs to the RbfA family. As to quaternary structure, monomer. Binds 30S ribosomal subunits, but not 50S ribosomal subunits or 70S ribosomes.

It localises to the cytoplasm. Its function is as follows. One of several proteins that assist in the late maturation steps of the functional core of the 30S ribosomal subunit. Associates with free 30S ribosomal subunits (but not with 30S subunits that are part of 70S ribosomes or polysomes). Required for efficient processing of 16S rRNA. May interact with the 5'-terminal helix region of 16S rRNA. The polypeptide is Ribosome-binding factor A (Chlamydia felis (strain Fe/C-56) (Chlamydophila felis)).